A 312-amino-acid polypeptide reads, in one-letter code: Ribonuclease Z (312 aa).

Zn(2+) is bound by residues His62, His64, Asp66, His67, His139, Asp210, and His268. The Proton acceptor role is filled by Asp66.

Belongs to the RNase Z family. As to quaternary structure, homodimer. Zn(2+) serves as cofactor.

The enzyme catalyses Endonucleolytic cleavage of RNA, removing extra 3' nucleotides from tRNA precursor, generating 3' termini of tRNAs. A 3'-hydroxy group is left at the tRNA terminus and a 5'-phosphoryl group is left at the trailer molecule.. In terms of biological role, zinc phosphodiesterase, which displays some tRNA 3'-processing endonuclease activity. Probably involved in tRNA maturation, by removing a 3'-trailer from precursor tRNA. This Crocosphaera subtropica (strain ATCC 51142 / BH68) (Cyanothece sp. (strain ATCC 51142)) protein is Ribonuclease Z.